Here is a 445-residue protein sequence, read N- to C-terminus: Phosphoglucosamine mutase (445 aa).

S102 acts as the Phosphoserine intermediate in catalysis. Mg(2+) contacts are provided by S102, D241, D243, and D245. Position 102 is a phosphoserine (S102).

The protein belongs to the phosphohexose mutase family. The cofactor is Mg(2+). Activated by phosphorylation.

The catalysed reaction is alpha-D-glucosamine 1-phosphate = D-glucosamine 6-phosphate. In terms of biological role, catalyzes the conversion of glucosamine-6-phosphate to glucosamine-1-phosphate. The protein is Phosphoglucosamine mutase of Escherichia coli O7:K1 (strain IAI39 / ExPEC).